The chain runs to 494 residues: Succinoglycan biosynthesis transport protein ExoT (494 aa).

The next 13 membrane-spanning stretches (helical) occupy residues 16 to 36 (WSVL…PILA), 44 to 64 (FGAV…GGAG), 82 to 102 (SVFW…FVFA), 105 to 125 (LATL…SLLI), 157 to 177 (LGAV…SLLA), 215 to 235 (FGMM…MVVI), 253 to 273 (FASI…FPTF), 297 to 317 (LLAP…LVLF), 321 to 341 (WAYA…LTPC), 343 to 363 (TFIP…WALI), 384 to 404 (AMIW…WVVF), 421 to 441 (PMIA…HFGA), and 447 to 467 (VLQL…LILL).

Belongs to the polysaccharide synthase family.

The protein localises to the cell membrane. The protein operates within glycan metabolism; exopolysaccharide biosynthesis. The polypeptide is Succinoglycan biosynthesis transport protein ExoT (exoT) (Rhizobium meliloti (strain 1021) (Ensifer meliloti)).